Consider the following 155-residue polypeptide: WPP domain-containing protein 1 (155 aa).

2 disordered regions span residues 1–41 (MAET…VTIS) and 124–155 (SVKA…SSEA). Over residues 7–39 (ESITTSSPPPISETENSTTLPTTETEKNPNPVT) the composition is skewed to low complexity. Residues 28 to 131 (TTETEKNPNP…LESVKAKSNV (104 aa)) are WPP. A compositionally biased stretch (basic and acidic residues) spans 146–155 (VDSKIDSSEA).

In terms of assembly, binds to FPP proteins. Interacts with WAP, WIP1, WIP2 and WIP3 through its WPP domain. Interacts with HSP70-1, HSP70-3 and WIT1. Component of a ternary complex composed of WPP1, HSP70-1 and WIT1. In terms of tissue distribution, expressed in roots, stems and leaves.

Its subcellular location is the nucleus envelope. It localises to the cytoplasm. The protein localises to the nucleus. The protein resides in the golgi apparatus. It is found in the nucleus matrix. In terms of biological role, regulates the mitotic activity in roots. Plays a role with HSP70-1 in facilitating WIT1 nuclear envelope targeting. In Arabidopsis thaliana (Mouse-ear cress), this protein is WPP domain-containing protein 1 (WPP1).